Consider the following 382-residue polypeptide: Galactokinase (382 aa).

34 to 37 (EHTD) is a binding site for substrate. Residue 124-130 (GAGLSSS) participates in ATP binding. Positions 130 and 162 each coordinate Mg(2+). D174 (proton acceptor) is an active-site residue. Y223 provides a ligand contact to substrate.

It belongs to the GHMP kinase family. GalK subfamily.

The protein resides in the cytoplasm. It carries out the reaction alpha-D-galactose + ATP = alpha-D-galactose 1-phosphate + ADP + H(+). The protein operates within carbohydrate metabolism; galactose metabolism. In terms of biological role, catalyzes the transfer of the gamma-phosphate of ATP to D-galactose to form alpha-D-galactose-1-phosphate (Gal-1-P). This is Galactokinase from Escherichia coli (strain SMS-3-5 / SECEC).